Consider the following 323-residue polypeptide: Ferrochelatase (323 aa).

Fe cation-binding residues include His196 and Glu277.

Belongs to the ferrochelatase family.

It is found in the cytoplasm. It catalyses the reaction heme b + 2 H(+) = protoporphyrin IX + Fe(2+). The protein operates within porphyrin-containing compound metabolism; protoheme biosynthesis; protoheme from protoporphyrin-IX: step 1/1. In terms of biological role, catalyzes the ferrous insertion into protoporphyrin IX. The polypeptide is Ferrochelatase (Haemophilus influenzae (strain ATCC 51907 / DSM 11121 / KW20 / Rd)).